We begin with the raw amino-acid sequence, 145 residues long: Immune protein Tsi4 (145 aa).

The next 2 helical transmembrane spans lie at 9-29 and 109-129; these read IGGL…LLAG and ALWG…IVGF.

The protein localises to the membrane. Its function is as follows. Immunity protein that plays a role in preventing early activation of toxin Tse4. The protein is Immune protein Tsi4 of Pseudomonas aeruginosa (strain ATCC 15692 / DSM 22644 / CIP 104116 / JCM 14847 / LMG 12228 / 1C / PRS 101 / PAO1).